A 142-amino-acid chain; its full sequence is MPNFNRHQIRQAAFQVLFTLNANQSLELEDAYQAVLTMDQFDAEEVTPVEVPAYLAFLVSGVTENQAALDAALTPYLKKGWQLSRLAKPDLIILRLGLFEMQNSTEAPAKVALNEALELAKQFTDDQAKGFINGVLSKFVEA.

Belongs to the NusB family.

Its function is as follows. Involved in transcription antitermination. Required for transcription of ribosomal RNA (rRNA) genes. Binds specifically to the boxA antiterminator sequence of the ribosomal RNA (rrn) operons. This chain is Transcription antitermination protein NusB, found in Latilactobacillus sakei subsp. sakei (strain 23K) (Lactobacillus sakei subsp. sakei).